We begin with the raw amino-acid sequence, 573 residues long: Urease subunit alpha 2 (573 aa).

Positions G135–S573 constitute a Urease domain. Residues H140, H142, and K223 each coordinate Ni(2+). An N6-carboxylysine modification is found at K223. H225 contributes to the substrate binding site. 2 residues coordinate Ni(2+): H252 and H278. The active-site Proton donor is the H326. D366 is a binding site for Ni(2+).

It belongs to the metallo-dependent hydrolases superfamily. Urease alpha subunit family. In terms of assembly, heterotrimer of UreA (gamma), UreB (beta) and UreC (alpha) subunits. Three heterotrimers associate to form the active enzyme. Requires Ni cation as cofactor. Post-translationally, carboxylation allows a single lysine to coordinate two nickel ions.

It is found in the cytoplasm. It carries out the reaction urea + 2 H2O + H(+) = hydrogencarbonate + 2 NH4(+). It participates in nitrogen metabolism; urea degradation; CO(2) and NH(3) from urea (urease route): step 1/1. This Brucella melitensis biotype 1 (strain ATCC 23456 / CCUG 17765 / NCTC 10094 / 16M) protein is Urease subunit alpha 2.